Here is a 902-residue protein sequence, read N- to C-terminus: Protein translocase subunit SecA (902 aa).

Residues Gln85, 103-107 (GEGKT), and Asp492 each bind ATP. The disordered stretch occupies residues 846 to 902 (LSYSGGGEEPNQRPKSPRRRSERKIGPNEPCPCGSGKKFKKCHGRVGAPPLPTSQSQ). Zn(2+) contacts are provided by Cys876, Cys878, Cys887, and His888.

The protein belongs to the SecA family. Monomer and homodimer. Part of the essential Sec protein translocation apparatus which comprises SecA, SecYEG and auxiliary proteins SecDF. Other proteins may also be involved. The cofactor is Zn(2+).

The protein localises to the cell membrane. The protein resides in the cytoplasm. It catalyses the reaction ATP + H2O + cellular proteinSide 1 = ADP + phosphate + cellular proteinSide 2.. Its function is as follows. Part of the Sec protein translocase complex. Interacts with the SecYEG preprotein conducting channel. Has a central role in coupling the hydrolysis of ATP to the transfer of proteins into and across the cell membrane, serving as an ATP-driven molecular motor driving the stepwise translocation of polypeptide chains across the membrane. The polypeptide is Protein translocase subunit SecA (Rubrobacter xylanophilus (strain DSM 9941 / JCM 11954 / NBRC 16129 / PRD-1)).